The sequence spans 160 residues: MATQKKPDLSDPQLRAKLAKGMGHNYYGEPAWPNDLLYVFPIVIMGSFAAIVALAVLDPAMTGEPANPFATPLEILPEWYLYPVFQILRSLPNKLLGVLAMGSVPVGLILVPFIENVNKFQNPFRRPVATTVFLVGTLVTVWLGIGAALPLDKSLTLGLF.

The next 3 membrane-spanning stretches (helical) occupy residues 36–56 (LLYV…ALAV), 95–115 (LLGV…PFIE), and 131–151 (TVFL…ALPL).

It belongs to the cytochrome b family. PetD subfamily. As to quaternary structure, the 4 large subunits of the cytochrome b6-f complex are cytochrome b6, subunit IV (17 kDa polypeptide, PetD), cytochrome f and the Rieske protein, while the 4 small subunits are PetG, PetL, PetM and PetN. The complex functions as a dimer.

It is found in the cellular thylakoid membrane. Component of the cytochrome b6-f complex, which mediates electron transfer between photosystem II (PSII) and photosystem I (PSI), cyclic electron flow around PSI, and state transitions. In Nostoc punctiforme (strain ATCC 29133 / PCC 73102), this protein is Cytochrome b6-f complex subunit 4.